The sequence spans 699 residues: Protein phosphatase 1 regulatory subunit 37 (699 aa).

Residues 1–12 (MEIPPQEAPPGP) are compositionally biased toward pro residues. Residues 1–42 (MEIPPQEAPPGPGADGEAEEAPVEAPSPGPASPPADGRLKAA) form a disordered region. Phosphoserine occurs at positions 50 and 56. 5 LRR repeats span residues 220–240 (SLAV…MLLA), 248–269 (TLRE…AQLG), 277–297 (SLQI…AYIC), 306–326 (GLAT…AFLG), and 334–354 (SLET…RNLK). The disordered stretch occupies residues 467–667 (RLQLSASMPE…PPGPEAKVGS (201 aa)). A compositionally biased stretch (acidic residues) spans 510–525 (SDSDSDSEGEDRDEAD). At Ser-566 the chain carries Phosphoserine. Pro residues-rich tracts occupy residues 588-613 (PPVP…PFPT) and 622-642 (DPGP…PPLP).

It belongs to the PPP1R37 family. Interacts with PPP1CA.

Its function is as follows. Inhibits phosphatase activity of protein phosphatase 1 (PP1) complexes. The protein is Protein phosphatase 1 regulatory subunit 37 (PPP1R37) of Bos taurus (Bovine).